Consider the following 204-residue polypeptide: Ribosome maturation factor RimP (204 aa).

Belongs to the RimP family.

Its subcellular location is the cytoplasm. Its function is as follows. Required for maturation of 30S ribosomal subunits. The sequence is that of Ribosome maturation factor RimP from Albidiferax ferrireducens (strain ATCC BAA-621 / DSM 15236 / T118) (Rhodoferax ferrireducens).